The primary structure comprises 102 residues: Small ribosomal subunit protein uS10 (102 aa).

This sequence belongs to the universal ribosomal protein uS10 family. Part of the 30S ribosomal subunit.

Functionally, involved in the binding of tRNA to the ribosomes. This Hyperthermus butylicus (strain DSM 5456 / JCM 9403 / PLM1-5) protein is Small ribosomal subunit protein uS10.